We begin with the raw amino-acid sequence, 154 residues long: Ribosomal RNA large subunit methyltransferase H (154 aa).

Residue Gly102 participates in S-adenosyl-L-methionine binding.

Belongs to the RNA methyltransferase RlmH family. As to quaternary structure, homodimer.

It localises to the cytoplasm. It catalyses the reaction pseudouridine(1915) in 23S rRNA + S-adenosyl-L-methionine = N(3)-methylpseudouridine(1915) in 23S rRNA + S-adenosyl-L-homocysteine + H(+). Its function is as follows. Specifically methylates the pseudouridine at position 1915 (m3Psi1915) in 23S rRNA. This Caulobacter sp. (strain K31) protein is Ribosomal RNA large subunit methyltransferase H.